The following is a 123-amino-acid chain: Neuropeptide-like peptides nlp-40 (123 aa).

The signal sequence occupies residues 1–17 (MKLVILLSFVATVAVFA). 3 propeptides span residues 30-31 (RA), 66-67 (KR), and 75-76 (KR).

As to expression, expressed in intestinal cells.

It is found in the secreted. It localises to the cytoplasmic vesicle. In terms of biological role, neuropeptide ligand for the G-protein coupled receptor aex-2. Activates and regulates the rhythmic calcium influx in DVB GABergic neurons during the defecation motor program, which is a coordinated series of three muscle contractions that occurs every 45 seconds. The polypeptide is Neuropeptide-like peptides nlp-40 (Caenorhabditis elegans).